A 159-amino-acid polypeptide reads, in one-letter code: Ribosome maturation factor RimP (159 aa).

The protein belongs to the RimP family.

Its subcellular location is the cytoplasm. In terms of biological role, required for maturation of 30S ribosomal subunits. The sequence is that of Ribosome maturation factor RimP from Streptococcus pneumoniae (strain 70585).